The primary structure comprises 218 residues: Small ribosomal subunit protein uS3 (218 aa).

Residues 38–106 enclose the KH type-2 domain; the sequence is IREYLTKRLS…RVHINIVEIK (69 aa).

The protein belongs to the universal ribosomal protein uS3 family. In terms of assembly, part of the 30S ribosomal subunit. Forms a tight complex with proteins S10 and S14.

Binds the lower part of the 30S subunit head. Binds mRNA in the 70S ribosome, positioning it for translation. This Anoxybacillus flavithermus (strain DSM 21510 / WK1) protein is Small ribosomal subunit protein uS3.